The sequence spans 395 residues: Lipoyl synthase, mitochondrial (395 aa).

Residues 1–24 (MVKLPSASRIRSLATVPSTATRAF) constitute a mitochondrion transit peptide. Positions 107, 112, 118, 137, 141, 144, and 357 each coordinate [4Fe-4S] cluster. One can recognise a Radical SAM core domain in the interval 122–346 (GKGNATATIM…KNVAEGMGFL (225 aa)).

This sequence belongs to the radical SAM superfamily. Lipoyl synthase family. Requires [4Fe-4S] cluster as cofactor.

It is found in the mitochondrion. It catalyses the reaction [[Fe-S] cluster scaffold protein carrying a second [4Fe-4S](2+) cluster] + N(6)-octanoyl-L-lysyl-[protein] + 2 oxidized [2Fe-2S]-[ferredoxin] + 2 S-adenosyl-L-methionine + 4 H(+) = [[Fe-S] cluster scaffold protein] + N(6)-[(R)-dihydrolipoyl]-L-lysyl-[protein] + 4 Fe(3+) + 2 hydrogen sulfide + 2 5'-deoxyadenosine + 2 L-methionine + 2 reduced [2Fe-2S]-[ferredoxin]. Its pathway is protein modification; protein lipoylation via endogenous pathway; protein N(6)-(lipoyl)lysine from octanoyl-[acyl-carrier-protein]: step 2/2. Catalyzes the radical-mediated insertion of two sulfur atoms into the C-6 and C-8 positions of the octanoyl moiety bound to the lipoyl domains of lipoate-dependent enzymes, thereby converting the octanoylated domains into lipoylated derivatives. The polypeptide is Lipoyl synthase, mitochondrial (Cryptococcus neoformans var. neoformans serotype D (strain B-3501A) (Filobasidiella neoformans)).